The chain runs to 802 residues: MANTKKTTLDITGMTCAACSNRIEKKLNKLDDVNAQVNLTTEKATVEYNPDRHDVQEFINTIQHLGYGVAVETVELDITGMTCAACSSRIEKVLNKMDGVQNATVNLTTEQAKVDYYPEETDADKLVTRIQKLGYDASIKDNNRDQTSRKAEALQHKLIKLIISAVLSLPLLMLMFVHLFNMHIPALFTNPWFQFILATPVQFIIGWQFYVGAYKNLRNGGANMDVLVAVGTSAAYFYSIYEMVRWLNGSTTQPHLYFETSAVLITLILFGKYLEARAKSQTTNALGELLSLQAKEARILKDGNEVMIPLNEVHVGDTLIVKPGEKIPVDGKIIKGMTAIDESMLTGESIPVEKNVDDTVIGSTMNKNGTITMTATKVGGDTALANIIKVVEEAQSSKAPIQRLADIISGYFVPIVVGIALLTFIVWITLVTPGTFEPALVASISVLVIACPCALGLATPTSIMVGTGRAAENGILFKGGEFVERTHQIDTIVLDKTGTITNGCPVVTDYHGDDQTLQLLATAEKDSEHPLAEAIVNYAKEKQLTLTETTTFKAVPGHGIEATIDHHHILVGNRKLMADNDISLPKHISDDLTHYERDGKTAMLIAVNYSLTGIIAVADTVKDHAKDAIKQLHDMGIEVAMLTGDNKNTAQAIAKQVGIDTVIADILPEEKAAQITKLQQQGKKVAMVGDGVNDAPALVKADIGIAIGTGTEVAIEAADITILGGDLMLIPKAIYASKATIRNIRQNLFWAFGYNIAGIPIAALGLLAPWVAGAAMALSSVSVVTNALRLKKMRLEPRRKDA.

2 HMA domains span residues 5 to 70 and 72 to 138; these read KKTT…YGVA and ETVE…YDAS. 4 residues coordinate Cu(+): Cys-16, Cys-19, Cys-83, and Cys-86. 6 helical membrane passes run 161 to 181, 192 to 212, 224 to 244, 256 to 276, 411 to 431, and 438 to 458; these read LIIS…HLFN, WFQF…FYVG, MDVL…YEMV, LYFE…YLEA, YFVP…ITLV, and PALV…LGLA. The active-site 4-aspartylphosphate intermediate is the Asp-495. Mg(2+) contacts are provided by Asp-690 and Asp-694. 2 consecutive transmembrane segments (helical) span residues 748–767 and 771–790; these read LFWA…LGLL and VAGA…ALRL.

The protein belongs to the cation transport ATPase (P-type) (TC 3.A.3) family. Type IB subfamily.

The protein resides in the cell membrane. The enzyme catalyses Cu(+)(in) + ATP + H2O = Cu(+)(out) + ADP + phosphate + H(+). In terms of biological role, involved in copper export. In Staphylococcus aureus (strain MRSA252), this protein is Copper-exporting P-type ATPase (copA).